The sequence spans 292 residues: N-acetylneuraminate lyase (292 aa).

2 residues coordinate aceneuramate: S46 and T47. The active-site Proton donor is the Y135. The active-site Schiff-base intermediate with substrate is K163. Residues T165, G187, D189, E190, and S206 each coordinate aceneuramate.

It belongs to the DapA family. NanA subfamily. In terms of assembly, homotetramer.

It is found in the cytoplasm. It catalyses the reaction aceneuramate = aldehydo-N-acetyl-D-mannosamine + pyruvate. It functions in the pathway amino-sugar metabolism; N-acetylneuraminate degradation; D-fructose 6-phosphate from N-acetylneuraminate: step 1/5. Catalyzes the reversible aldol cleavage of N-acetylneuraminic acid (sialic acid; Neu5Ac) to form pyruvate and N-acetylmannosamine (ManNAc) via a Schiff base intermediate. This is N-acetylneuraminate lyase from Lactiplantibacillus plantarum (strain ATCC BAA-793 / NCIMB 8826 / WCFS1) (Lactobacillus plantarum).